The chain runs to 267 residues: Formamidopyrimidine-DNA glycosylase (267 aa).

Pro2 serves as the catalytic Schiff-base intermediate with DNA. Glu3 (proton donor) is an active-site residue. Lys58 acts as the Proton donor; for beta-elimination activity in catalysis. DNA-binding residues include His91, Arg110, and Arg152. An FPG-type zinc finger spans residues Asp233–Gln267. The Proton donor; for delta-elimination activity role is filled by Arg257.

It belongs to the FPG family. Monomer. Requires Zn(2+) as cofactor.

The enzyme catalyses Hydrolysis of DNA containing ring-opened 7-methylguanine residues, releasing 2,6-diamino-4-hydroxy-5-(N-methyl)formamidopyrimidine.. It catalyses the reaction 2'-deoxyribonucleotide-(2'-deoxyribose 5'-phosphate)-2'-deoxyribonucleotide-DNA = a 3'-end 2'-deoxyribonucleotide-(2,3-dehydro-2,3-deoxyribose 5'-phosphate)-DNA + a 5'-end 5'-phospho-2'-deoxyribonucleoside-DNA + H(+). Its function is as follows. Involved in base excision repair of DNA damaged by oxidation or by mutagenic agents. Acts as a DNA glycosylase that recognizes and removes damaged bases. Has a preference for oxidized purines, such as 7,8-dihydro-8-oxoguanine (8-oxoG). Has AP (apurinic/apyrimidinic) lyase activity and introduces nicks in the DNA strand. Cleaves the DNA backbone by beta-delta elimination to generate a single-strand break at the site of the removed base with both 3'- and 5'-phosphates. This Pelobacter propionicus (strain DSM 2379 / NBRC 103807 / OttBd1) protein is Formamidopyrimidine-DNA glycosylase.